The sequence spans 1742 residues: Meiosis regulator and mRNA stability factor 1 (1742 aa).

The residue at position 65 (Ser65) is a Phosphoserine. An NYN domain is found at 351-488 (IGVFWDIENC…ALLHHANELI (138 aa)). Disordered regions lie at residues 620–642 (PSSA…TRNA) and 655–721 (SKTG…KEKE). Over residues 631–642 (SQANSGSATRNA) the composition is skewed to polar residues. Over residues 673-689 (APPHRSSSAAAPAPKAP) the composition is skewed to low complexity. At Tyr696 the chain carries Phosphotyrosine. Ser757 carries the post-translational modification Phosphoserine. An RRM domain is found at 788-867 (VDVQISNLDY…KKILVSLATG (80 aa)). HTH OST-type domains follow at residues 872–946 (SLSL…SPLG) and 1000–1077 (SLKT…HNKP). A phosphoserine mark is found at Ser1089 and Ser1091. HTH OST-type domains lie at 1097 to 1171 (QLIQ…LTHR), 1173 to 1247 (QVKR…CIPR), 1257 to 1332 (RTKQ…TEVE), 1333 to 1408 (RFKA…INRK), 1409 to 1484 (SLRA…CVKL), and 1486 to 1560 (SLYL…LKND). Phosphoserine is present on Ser1571. The segment at 1678–1729 (IRNENLPPDPSSPGVSAAVPAPPSPSSETPESLLSKDPTESPAKKQPKNRVK) is disordered. The span at 1703–1712 (SSETPESLLS) shows a compositional bias: low complexity.

In terms of assembly, interacts with LIMK2.

The protein resides in the peroxisome. Its function is as follows. Essential regulator of oogenesis required for female meiotic progression to repress transposable elements and preventing their mobilization, which is essential for the germline integrity. Probably acts via some RNA metabolic process, equivalent to the piRNA system in males, which mediates the repression of transposable elements during meiosis by forming complexes composed of RNAs and governs the methylation and subsequent repression of transposons. Also required to protect from DNA double-strand breaks. This is Meiosis regulator and mRNA stability factor 1 from Bos taurus (Bovine).